Consider the following 417-residue polypeptide: Histidine--tRNA ligase (417 aa).

The protein belongs to the class-II aminoacyl-tRNA synthetase family. Homodimer.

The protein resides in the cytoplasm. It carries out the reaction tRNA(His) + L-histidine + ATP = L-histidyl-tRNA(His) + AMP + diphosphate + H(+). This Caldanaerobacter subterraneus subsp. tengcongensis (strain DSM 15242 / JCM 11007 / NBRC 100824 / MB4) (Thermoanaerobacter tengcongensis) protein is Histidine--tRNA ligase.